Consider the following 1088-residue polypeptide: PAN2-PAN3 deadenylation complex catalytic subunit pan2 (1088 aa).

WD repeat units follow at residues 16–56, 136–175, 178–224, and 270–309; these read VSTC…YTQF, HKDK…PVNK, AHTG…SLVP, and PLTS…SFSD. Positions 309 to 443 are linker; the sequence is DLKLPIQLPN…EDTISGPDSI (135 aa). In terms of domain architecture, USP spans 443 to 814; the sequence is IPKFYQRPVI…IPIIVYYEKL (372 aa). Residues 860-1033 form the Exonuclease domain; sequence VGIDSEFVAL…EDALTALKLY (174 aa). A divalent metal cation-binding residues include D863, E865, D972, and D1025.

The protein belongs to the peptidase C19 family. PAN2 subfamily. As to quaternary structure, forms a heterotrimer with an asymmetric homodimer of the regulatory subunit ppk26/pan3 to form the poly(A)-nuclease (PAN) deadenylation complex. Requires a divalent metal cation as cofactor.

It localises to the cytoplasm. It carries out the reaction Exonucleolytic cleavage of poly(A) to 5'-AMP.. Positively regulated by the regulatory subunit ppk26/pan3. Catalytic subunit of the poly(A)-nuclease (PAN) deadenylation complex, one of two cytoplasmic mRNA deadenylases involved in mRNA turnover. PAN specifically shortens poly(A) tails of RNA and the activity is stimulated by poly(A)-binding protein pab1. PAN deadenylation is followed by rapid degradation of the shortened mRNA tails by the CCR4-NOT complex. Deadenylated mRNAs are then degraded by two alternative mechanisms, namely exosome-mediated 3'-5' exonucleolytic degradation, or deadenylation-dependent mRNA decaping and subsequent 5'-3' exonucleolytic degradation by xrn1. May also be involved in post-transcriptional maturation of mRNA poly(A) tails. In Schizosaccharomyces pombe (strain 972 / ATCC 24843) (Fission yeast), this protein is PAN2-PAN3 deadenylation complex catalytic subunit pan2.